The primary structure comprises 368 residues: Phospho-N-acetylmuramoyl-pentapeptide-transferase (368 aa).

9 helical membrane passes run 23–43 (YLTF…IFAG), 72–92 (VPTM…FLWA), 98–118 (HVWL…IDDY), 139–159 (VTLG…SVLL), 170–190 (LSVD…TAVS), 201–221 (GLAA…AYLC), 238–258 (AGEV…FLWF), 281–301 (VIAL…VFFV), and 345–365 (KIVI…LMTL).

It belongs to the glycosyltransferase 4 family. MraY subfamily. It depends on Mg(2+) as a cofactor.

The protein localises to the cell inner membrane. It carries out the reaction UDP-N-acetyl-alpha-D-muramoyl-L-alanyl-gamma-D-glutamyl-meso-2,6-diaminopimeloyl-D-alanyl-D-alanine + di-trans,octa-cis-undecaprenyl phosphate = di-trans,octa-cis-undecaprenyl diphospho-N-acetyl-alpha-D-muramoyl-L-alanyl-D-glutamyl-meso-2,6-diaminopimeloyl-D-alanyl-D-alanine + UMP. It functions in the pathway cell wall biogenesis; peptidoglycan biosynthesis. In terms of biological role, catalyzes the initial step of the lipid cycle reactions in the biosynthesis of the cell wall peptidoglycan: transfers peptidoglycan precursor phospho-MurNAc-pentapeptide from UDP-MurNAc-pentapeptide onto the lipid carrier undecaprenyl phosphate, yielding undecaprenyl-pyrophosphoryl-MurNAc-pentapeptide, known as lipid I. The polypeptide is Phospho-N-acetylmuramoyl-pentapeptide-transferase (Chlorobaculum tepidum (strain ATCC 49652 / DSM 12025 / NBRC 103806 / TLS) (Chlorobium tepidum)).